A 724-amino-acid chain; its full sequence is MEFGSFLVSLGTSFVIFVILMLLFTWLSRKSGNAPIYYPNRILKGLEPWEGTSLTRNPFAWMREALTSSEQDVVNLSGVDTAVHFVFLSTVLGIFACSSLLLLPTLLPLAATDNNIKNTKNATDTTSKGTFSQLDNLSMANITKKSSRLWAFLGAVYWISLVTYFFLWKAYKHVSSLRAQALMSADVKPEQFAILVRDMPAPPDGQTQKEFIDSYFREIYPETFYRSLVATENSKVNKIWEKLEGYKKKLARAEAILAATNNRPTNKTGFCGLVGKQVDSIEYYTELINESVAKLETEQKAVLAEKQQTAAVVFFTTRVAAASAAQSLHCQMVDKWTVTEAPEPRQLLWQNLNIKLFSRIIRQYFIYFFVAVTILFYMIPIAFVSAITTLKNLQRIIPFIKPVVEITAIRTVLESFLPQIALIVFLAMLPKLLLFLSKAEGIPSQSHAIRAASGKYFYFSVFNVFIGVTLAGTLFNTVKDIAKNPKLDMIINLLATSLPKSATFFLTYVALKFFIGYGLELSRIIPLIIFHLKKKYLCKTEAEVKEAWYPGDLSYATRVPGDMLILTITFCYSVIAPLILIFGITYFGLGWLVLRNQALKVYVPSYESYGRMWPHIHQRILAALFLFQVVMFGYLGAKTFFYTALVIPLIITSLIFGYVCRQKFYGGFEHTALEVACRELKQSPDLEEIFRAYIPHSLSSHKPEEHEFKGAMSRYQDFNAIAGV.

The Extracellular portion of the chain corresponds to Met-1–Gly-4. A helical transmembrane segment spans residues Ser-5–Thr-25. Residues Trp-26–Phe-85 lie on the Cytoplasmic side of the membrane. Residues Val-86–Pro-108 form a helical membrane-spanning segment. Over Leu-109–Ser-147 the chain is Extracellular. A helical transmembrane segment spans residues Arg-148 to Ala-170. The Cytoplasmic portion of the chain corresponds to Tyr-171–Ser-358. Positions Glu-241–Thr-309 form a coiled coil. Residues Arg-359–Ser-385 form a helical membrane-spanning segment. Residues Ala-386–Thr-411 lie on the Extracellular side of the membrane. The helical transmembrane segment at Val-412–Ala-439 threads the bilayer. Residues Glu-440–Ala-448 are Cytoplasmic-facing. Residues Ile-449–Gly-472 form a helical membrane-spanning segment. The Extracellular portion of the chain corresponds to Thr-473–Ser-497. Residues Leu-498–Ile-529 traverse the membrane as a helical segment. Over Phe-530 to Ser-554 the chain is Cytoplasmic. Residues Tyr-555–Val-574 traverse the membrane as a helical segment. Residue Ile-575 is a topological domain, extracellular. Residues Ala-576 to Leu-594 form a helical membrane-spanning segment. At Arg-595 to Met-612 the chain is on the cytoplasmic side. Residues Trp-613–Gly-636 form a helical membrane-spanning segment. Over Ala-637–Phe-641 the chain is Extracellular. A helical membrane pass occupies residues Tyr-642 to Gln-662. The Cytoplasmic segment spans residues Lys-663–Val-724.

This sequence belongs to the CSC1 (TC 1.A.17) family. In terms of assembly, homodimer.

The protein resides in the membrane. Its function is as follows. Acts as a hyperosmolarity-gated non-selective cation channel that permeates Ca(2+) ions. Mechanosensitive ion channel that converts mechanical stimuli into a flow of ions: activated in response to membrane stretch. Not activated in response to membrane poke. This chain is Hyperosmolality-gated Ca2+ permeable channel 3.1, found in Arabidopsis thaliana (Mouse-ear cress).